Reading from the N-terminus, the 238-residue chain is Pyridoxine 5'-phosphate synthase (238 aa).

2 residues coordinate 3-amino-2-oxopropyl phosphate: N7 and R18. Catalysis depends on H43, which acts as the Proton acceptor. The 1-deoxy-D-xylulose 5-phosphate site is built by R45 and H50. The Proton acceptor role is filled by E70. T100 contributes to the 1-deoxy-D-xylulose 5-phosphate binding site. Catalysis depends on H190, which acts as the Proton donor. 3-amino-2-oxopropyl phosphate-binding positions include D191 and 213-214 (GH).

This sequence belongs to the PNP synthase family. As to quaternary structure, homooctamer; tetramer of dimers.

The protein localises to the cytoplasm. It carries out the reaction 3-amino-2-oxopropyl phosphate + 1-deoxy-D-xylulose 5-phosphate = pyridoxine 5'-phosphate + phosphate + 2 H2O + H(+). It participates in cofactor biosynthesis; pyridoxine 5'-phosphate biosynthesis; pyridoxine 5'-phosphate from D-erythrose 4-phosphate: step 5/5. In terms of biological role, catalyzes the complicated ring closure reaction between the two acyclic compounds 1-deoxy-D-xylulose-5-phosphate (DXP) and 3-amino-2-oxopropyl phosphate (1-amino-acetone-3-phosphate or AAP) to form pyridoxine 5'-phosphate (PNP) and inorganic phosphate. The chain is Pyridoxine 5'-phosphate synthase from Phocaeicola vulgatus (strain ATCC 8482 / DSM 1447 / JCM 5826 / CCUG 4940 / NBRC 14291 / NCTC 11154) (Bacteroides vulgatus).